We begin with the raw amino-acid sequence, 227 residues long: Floral homeotic protein DEFICIENS (227 aa).

The MADS-box domain maps to 3–57 (RGKIQIKRIENQTNRQVTYSKRRNGLFKKAHELSVLCDAKVSIIMISSTQKLHEY). In terms of domain architecture, K-box spans 84–174 (YEKMQEHLKK…VLEFDARRED (91 aa)).

It is found in the nucleus. In terms of biological role, transcription factor involved in the genetic control of flower development. Acts in conjunction with GLOBOSA (glo). The protein is Floral homeotic protein DEFICIENS (DEFA) of Antirrhinum majus (Garden snapdragon).